Reading from the N-terminus, the 120-residue chain is Protein CcdB (120 aa).

A Response regulatory domain is found at 3–118 (RVLVVDDAKF…KVLEAVSRVM (116 aa)). 4-aspartylphosphate is present on Asp-53.

This is Protein CcdB (ccdB) from Bacillus subtilis (strain 168).